The primary structure comprises 295 residues: Aquaporin-9 (295 aa).

Over 1 to 24 the chain is Cytoplasmic; that stretch reads MPSEKDRAKKNLVQRLALKSCLAK. A helical membrane pass occupies residues 25–43; the sequence is ETLSEFLGTFIMIVLGCGS. Topologically, residues 44 to 57 are extracellular; that stretch reads IAQAVLSREKAGGI. The helical transmembrane segment at 58 to 77 threads the bilayer; it reads ITINIGFATAVVMALYATFG. The Cytoplasmic portion of the chain corresponds to 78–79; it reads VS. Positions 80-92 form an intramembrane region, discontinuously helical; sequence GGHINPAVSFAMC. An NPA 1 motif is present at residues 84 to 86; that stretch reads NPA. At 93-98 the chain is on the cytoplasmic side; that stretch reads TFGRME. Residues 99–123 form a helical membrane-spanning segment; sequence WFKFPFYVGAQLLGAFVGAATVFGI. Topologically, residues 124–160 are extracellular; that stretch reads YYDGLMAFADGKLLITGENGTAFIFATYPKPFVSVPG. Residues 161–178 form a helical membrane-spanning segment; it reads AFVDQVVSTMFLLLIVFA. Over 179 to 190 the chain is Cytoplasmic; that stretch reads IFDSRNLGVPRG. A helical membrane pass occupies residues 191–207; it reads LEPIVIGLLIIVISCSL. Topologically, residues 208-210 are extracellular; that stretch reads GLN. The discontinuously helical intramembrane region spans 211–225; it reads SGCAMNPARDLSPRL. The NPA 2 motif lies at 216 to 218; that stretch reads NPA. Topologically, residues 226-243 are extracellular; that stretch reads FTALAGWGFEVFTFGNNF. Residues 244-264 form a helical membrane-spanning segment; the sequence is WWIPVVGPMIGAVLGGLIYVL. At 265–295 the chain is on the cytoplasmic side; it reads FIQMHHSNPDPEVKAEPAENNLEKHELSVIM.

It belongs to the MIP/aquaporin (TC 1.A.8) family. Homotetramer; each monomer provides an independent glycerol/water pore.

The protein resides in the cell membrane. It localises to the basolateral cell membrane. It catalyses the reaction glycerol(in) = glycerol(out). The enzyme catalyses H2O(in) = H2O(out). The catalysed reaction is urea(in) = urea(out). It carries out the reaction (S)-lactate(in) = (S)-lactate(out). It catalyses the reaction NH4(+)(in) = NH4(+)(out). The enzyme catalyses uracil(in) = uracil(out). The catalysed reaction is adenine(out) = adenine(in). It carries out the reaction 3-hydroxybutanoate(in) = 3-hydroxybutanoate(out). It catalyses the reaction D-sorbitol(in) = D-sorbitol(out). The enzyme catalyses D-mannitol(in) = D-mannitol(out). The catalysed reaction is H2O2(out) = H2O2(in). It carries out the reaction arsenite(in) = arsenite(out). It catalyses the reaction selenite(in) = selenite(out). In terms of biological role, aquaglyceroporins form homotetrameric transmembrane channels, with each monomer independently mediating glycerol and water transport across the plasma membrane along their osmotic gradient. AQP9 is the primary route for glycerol uptake in hepatocytes, supporting hepatic gluconeogenesis. It exhibits broad specificity and may transport various small, non-charged solutes, including carbamides, polyols, purines, and pyrimidines. AQP9 may also facilitate hepatic urea extrusion. Due to its permeability to lactate, AQP9 might participate in the astrocyte-to-neuron lactate shuttle, supplying neurons with energy. Additionally, AQP9 is permeable to arsenite, contributing to arsenic excretion by the liver and providing partial protection against arsenic toxicity. It is also permeable to H2O2 in vivo. Could also be permeable to ammonium. The chain is Aquaporin-9 from Mus musculus (Mouse).